The following is a 324-amino-acid chain: Lactonase drp35 (324 aa).

Residues E47, S109, G111, D129, T132, Y134, D137, N184, D235, and S236 each contribute to the Ca(2+) site. D235 acts as the Proton donor in catalysis.

It belongs to the SMP-30/CGR1 family. Ca(2+) is required as a cofactor.

It localises to the cytoplasm. Its function is as follows. Exhibits lactonase activity. Acts in cells with perturbed membrane integrity and is possibly related to the membrane homeostasis. The sequence is that of Lactonase drp35 (drp35) from Staphylococcus aureus (strain MRSA252).